Here is a 609-residue protein sequence, read N- to C-terminus: Adenine deaminase (609 aa).

The protein belongs to the metallo-dependent hydrolases superfamily. Adenine deaminase family. The cofactor is Mn(2+).

It catalyses the reaction adenine + H2O + H(+) = hypoxanthine + NH4(+). The protein is Adenine deaminase of Cenarchaeum symbiosum (strain A).